Reading from the N-terminus, the 957-residue chain is SH3 domain-binding protein 4-A (957 aa).

In terms of domain architecture, SH3 1 spans 54 to 113; the sequence is ENVKEVVAIKDYCPNNFTTLKFSKGEHLYVLDASGGDWWYAHNSTEMGYIPSSYVQPLNY. Residues 312-449 enclose the ZU5 domain; the sequence is TSIVCRLDSS…LEPVMYVVMV (138 aa). One can recognise an SH3 2 domain in the interval 649–719; sequence TSLKYGKLLK…HAKNVLVVGK (71 aa).

Homodimer or homooligomer.

The protein localises to the membrane. The protein resides in the clathrin-coated pit. It is found in the cytoplasmic vesicle. It localises to the clathrin-coated vesicle. Its subcellular location is the nucleus. Possible role in regulating endocytosis of the transferrin receptor at the plasma membrane. Alternatively, may function as a negative regulator of the amino acid-induced TOR signaling by inhibiting the formation of active Rag GTPase complexes. Preferentially binds inactive Rag GTPase complexes and prevents their interaction with the mTORC1 complex inhibiting its relocalization to lysosomes and its activation. Thereby, may indirectly regulate cell growth, proliferation and autophagy. This is SH3 domain-binding protein 4-A (sh3bp4-a) from Xenopus laevis (African clawed frog).